A 625-amino-acid polypeptide reads, in one-letter code: Arginine--tRNA ligase (625 aa).

A 'HIGH' region motif is present at residues 128-138 (VNPTKPLHMGH).

The protein belongs to the class-I aminoacyl-tRNA synthetase family.

It is found in the cytoplasm. It carries out the reaction tRNA(Arg) + L-arginine + ATP = L-arginyl-tRNA(Arg) + AMP + diphosphate. This Pyrococcus abyssi (strain GE5 / Orsay) protein is Arginine--tRNA ligase (argS).